The primary structure comprises 174 residues: Shikimate kinase 2 (174 aa).

ATP is bound at residue 12 to 17; it reads GCGKTT. Residues Thr16 and Asp32 each contribute to the Mg(2+) site. 3 residues coordinate substrate: Asp34, Arg58, and Gly79. The LID domain stretch occupies residues 112–126; it reads QAAPEEDLRPTLTGK. Arg120 contributes to the ATP binding site. Arg139 contacts substrate.

This sequence belongs to the shikimate kinase family. AroL subfamily. Monomer. The cofactor is Mg(2+).

The protein localises to the cytoplasm. It carries out the reaction shikimate + ATP = 3-phosphoshikimate + ADP + H(+). Its pathway is metabolic intermediate biosynthesis; chorismate biosynthesis; chorismate from D-erythrose 4-phosphate and phosphoenolpyruvate: step 5/7. In terms of biological role, catalyzes the specific phosphorylation of the 3-hydroxyl group of shikimic acid using ATP as a cosubstrate. This chain is Shikimate kinase 2, found in Escherichia coli O81 (strain ED1a).